Consider the following 1393-residue polypeptide: DNA-directed RNA polymerase subunit beta' (1393 aa).

Residues Cys72, Cys74, Cys87, and Cys90 each contribute to the Zn(2+) site. Mg(2+)-binding residues include Asp463, Asp465, and Asp467. Zn(2+) contacts are provided by Cys812, Cys887, Cys894, and Cys897.

It belongs to the RNA polymerase beta' chain family. In terms of assembly, the RNAP catalytic core consists of 2 alpha, 1 beta, 1 beta' and 1 omega subunit. When a sigma factor is associated with the core the holoenzyme is formed, which can initiate transcription. The cofactor is Mg(2+). Zn(2+) is required as a cofactor.

It carries out the reaction RNA(n) + a ribonucleoside 5'-triphosphate = RNA(n+1) + diphosphate. In terms of biological role, DNA-dependent RNA polymerase catalyzes the transcription of DNA into RNA using the four ribonucleoside triphosphates as substrates. This Chlamydia felis (strain Fe/C-56) (Chlamydophila felis) protein is DNA-directed RNA polymerase subunit beta'.